A 104-amino-acid polypeptide reads, in one-letter code: UPF0473 protein LGAS_0424 (104 aa).

It belongs to the UPF0473 family.

This chain is UPF0473 protein LGAS_0424, found in Lactobacillus gasseri (strain ATCC 33323 / DSM 20243 / BCRC 14619 / CIP 102991 / JCM 1131 / KCTC 3163 / NCIMB 11718 / NCTC 13722 / AM63).